Reading from the N-terminus, the 240-residue chain is 6-carboxyhexanoate--CoA ligase (240 aa).

This sequence belongs to the BioW family. Homodimer. Mg(2+) is required as a cofactor.

The catalysed reaction is heptanedioate + ATP + CoA = 6-carboxyhexanoyl-CoA + AMP + diphosphate. The protein operates within metabolic intermediate metabolism; pimeloyl-CoA biosynthesis; pimeloyl-CoA from pimelate: step 1/1. In terms of biological role, catalyzes the transformation of pimelate into pimeloyl-CoA with concomitant hydrolysis of ATP to AMP. The polypeptide is 6-carboxyhexanoate--CoA ligase (Aquifex aeolicus (strain VF5)).